The sequence spans 502 residues: Membrane-bound lytic murein transglycosylase F (502 aa).

The first 33 residues, 1–33 (MSRFISTFRSSSAQLSIVLAVILATGCSQPTTL), serve as a signal peptide directing secretion. The tract at residues 34–264 (QEIREEGVLH…QLAERFYGHL (231 aa)) is non-LT domain. Residues 265–502 (DRLNYVGART…PELRLIPPTL (238 aa)) form an LT domain region. Glutamate 311 is a catalytic residue. Residues 457-502 (PSASGLEDQLAWLGDNEAGPEAPAKESQPDLRADLPPELRLIPPTL) are disordered. A compositionally biased stretch (basic and acidic residues) spans 479 to 493 (PAKESQPDLRADLPP).

The protein in the N-terminal section; belongs to the bacterial solute-binding protein 3 family. It in the C-terminal section; belongs to the transglycosylase Slt family.

The protein localises to the cell outer membrane. It catalyses the reaction Exolytic cleavage of the (1-&gt;4)-beta-glycosidic linkage between N-acetylmuramic acid (MurNAc) and N-acetylglucosamine (GlcNAc) residues in peptidoglycan, from either the reducing or the non-reducing ends of the peptidoglycan chains, with concomitant formation of a 1,6-anhydrobond in the MurNAc residue.. Functionally, murein-degrading enzyme that degrades murein glycan strands and insoluble, high-molecular weight murein sacculi, with the concomitant formation of a 1,6-anhydromuramoyl product. Lytic transglycosylases (LTs) play an integral role in the metabolism of the peptidoglycan (PG) sacculus. Their lytic action creates space within the PG sacculus to allow for its expansion as well as for the insertion of various structures such as secretion systems and flagella. In Marinobacter nauticus (strain ATCC 700491 / DSM 11845 / VT8) (Marinobacter aquaeolei), this protein is Membrane-bound lytic murein transglycosylase F.